Consider the following 510-residue polypeptide: MIWHVQNENFILDSTRIFMKAFHLLLFHGSFIFPECILIFGLILLLMIDSTSDQKDIPWLYFISSTSLVMSITALLFRWREEPMISFSGNFQTNNFNEIFQFLILLCSTLCIPLSVEYIECTEMAITEFLLFVLTATLGGMFLCGANDLITIFVAPECFSLCSYLLSGYTKRDVRSNEATTKYLLMGGASSSILVHGFSWLYGSSGGEIELQEIVNGLINTQMYNSPGISIALIFITVGIGFKLSPAPFHQWTPDVYEGSPTPVVAFLSVTSKVAASASATRIFDIPFYFSSNEWHLLLEILAILSMILGNLIAITQTSMKRMLAYSSIGQIGYVIIGIIVGDSNDGYASMITYMLFYISMNLGTFACIVLFGLRTGTDNIRDYAGLYTKDPFLALSSALCLLSLGGLPPLAGFFGKLYLFWCGWQAGLYFLVSIGLLMSVVSIYYYLKIIKLLMTGRNQEITPHMRNYRRYPLRSNNSIELSMILCVIASTIPGISMNPIIAIAQDTLF.

Transmembrane regions (helical) follow at residues 24 to 44, 57 to 77, 99 to 119, 124 to 144, 149 to 169, 183 to 203, 229 to 249, 295 to 315, 323 to 343, 354 to 374, 395 to 415, 418 to 438, and 484 to 504; these read LLLF…GLIL, IPWL…ALLF, IFQF…VEYI, MAIT…MFLC, LITI…LSGY, YLLM…WLYG, ISIA…PAPF, WHLL…LIAI, MLAY…IVGD, YMLF…LFGL, ALSS…AGFF, LYLF…IGLL, and MILC…IIAI.

It belongs to the complex I subunit 2 family. NDH is composed of at least 16 different subunits, 5 of which are encoded in the nucleus.

It localises to the plastid. Its subcellular location is the chloroplast thylakoid membrane. The enzyme catalyses a plastoquinone + NADH + (n+1) H(+)(in) = a plastoquinol + NAD(+) + n H(+)(out). The catalysed reaction is a plastoquinone + NADPH + (n+1) H(+)(in) = a plastoquinol + NADP(+) + n H(+)(out). Functionally, NDH shuttles electrons from NAD(P)H:plastoquinone, via FMN and iron-sulfur (Fe-S) centers, to quinones in the photosynthetic chain and possibly in a chloroplast respiratory chain. The immediate electron acceptor for the enzyme in this species is believed to be plastoquinone. Couples the redox reaction to proton translocation, and thus conserves the redox energy in a proton gradient. In Piper cenocladum (Ant piper), this protein is NAD(P)H-quinone oxidoreductase subunit 2 A, chloroplastic.